The following is a 150-amino-acid chain: Altered inheritance of mitochondria protein 11 (150 aa).

Helical transmembrane passes span M28–F45 and L77–W99.

The protein belongs to the AIM11 family.

It localises to the membrane. This Kluyveromyces lactis (strain ATCC 8585 / CBS 2359 / DSM 70799 / NBRC 1267 / NRRL Y-1140 / WM37) (Yeast) protein is Altered inheritance of mitochondria protein 11 (AIM11).